The chain runs to 45 residues: Large ribosomal subunit protein bL34 (45 aa).

A disordered region spans residues 1 to 45; it reads MTKRTFGGTSRKRKRVSGFRVRMRSHTGRRVIKSRRKRGRDRIAV. Residues 10–45 are compositionally biased toward basic residues; sequence SRKRKRVSGFRVRMRSHTGRRVIKSRRKRGRDRIAV.

Belongs to the bacterial ribosomal protein bL34 family.

The chain is Large ribosomal subunit protein bL34 from Prochlorococcus marinus (strain MIT 9515).